We begin with the raw amino-acid sequence, 421 residues long: C2H2 type master regulator of conidiophore development brlA (421 aa).

2 C2H2-type zinc fingers span residues 309 to 333 (FKCKEPGCKGRFKRQEHLKRHMKSH) and 339 to 364 (HVCWVPGCERAFSRSDNLNAHYTKTH). A disordered region spans residues 379-421 (ESSPDYDPDFRGQLTPDGLPIRGSTLDDPMPNSREYSVDGLDD).

The protein resides in the nucleus. BrlA, abaA and wetA are pivotal regulators of conidiophore development and conidium maturation. They act individually and together to regulate their own expression and that of numerous other sporulation-specific genes. Binds promoters of target genes at brlA response elements (BREs) containing the conserved sequence 5'-(C/A)(A/G)AGGG(G/A)-3'. Required for conidiophores formation. Controls expression of abaA. The sequence is that of C2H2 type master regulator of conidiophore development brlA from Aspergillus oryzae (strain ATCC 42149 / RIB 40) (Yellow koji mold).